The following is a 395-amino-acid chain: Teichoic acid D-alanyltransferase (395 aa).

Residues 1-6 (MTPYSS) lie on the Extracellular side of the membrane. A helical membrane pass occupies residues 7-26 (FLFFILLGILLLPTIILGLN). The Cytoplasmic segment spans residues 27 to 30 (GKRF). A helical transmembrane segment spans residues 31–46 (QAYNMFISIIILALIF). At 47–50 (SHDL) the chain is on the extracellular side. A helical membrane pass occupies residues 51–76 (HGVIALCLFTIWQVLLISGYLAYRQK). The Cytoplasmic portion of the chain corresponds to 77 to 79 (ANS). The helical transmembrane segment at 80–104 (GFVFCGAVIASILPLFLSKIWPFLS) threads the bilayer. The Extracellular segment spans residues 105 to 120 (HPQPHHPPHNLISFLG). The helical transmembrane segment at 121–137 (ISYLTFKGVQLIMEARD) threads the bilayer. The Cytoplasmic portion of the chain corresponds to 138–145 (GLLKEQLP). Residues 146-175 (LHRLLYFILFFPTISSGPIDRYRRFVKDEQ) lie within the membrane without spanning it. Residues 176-179 (KAWT) are Cytoplasmic-facing. A helical membrane pass occupies residues 180 to 223 (KEEYADLLYTGIHKIFIGFLYKFIIGYAINTYFIMNLPAITHNK). Position 224 (I224) is a topological domain, extracellular. The chain crosses the membrane as a helical span at residues 225-256 (LGNLLYMYGYSMYLFFDFAGYTMFAVGVSYIM). Residues 257–266 (GIKSPENFNK) are Cytoplasmic-facing. An intramembrane segment occupies 267 to 303 (PFISKNIKDFWNRWHMSLSFWFRDYVFMRFVFWMTKK). The Cytoplasmic segment spans residues 304 to 308 (KWIKN). Residues 309 to 328 (RMAVSNIGYFLLFMLMGVWH) form a helical membrane-spanning segment. H328 is an active-site residue. Topologically, residues 329–333 (GLAPQ) are extracellular. Residues 334–351 (YIIYGLYHAVLMTCYNFF) form a helical membrane-spanning segment. At 352–364 (EKWNKKYKWLPSN) the chain is on the cytoplasmic side. Residues 365–387 (RWTTILAIVITFHFVCFGFYIFS) form a helical membrane-spanning segment. Over 388–395 (GKPFHHHH) the chain is Extracellular.

This sequence belongs to the membrane-bound acyltransferase family.

It is found in the cell membrane. It participates in cell wall biogenesis; lipoteichoic acid biosynthesis. O-acyltransferase that catalyzes D-alanylation of both teichoic acid and lipoteichoic acid (LTA). D-alanylation of LTA plays an important role in modulating the properties of the cell wall in Gram-positive bacteria, influencing the net charge of the cell wall. Catalyzes D-alanylation from DltC carrier protein. The chain is Teichoic acid D-alanyltransferase from Bacillus subtilis (strain 168).